The chain runs to 1181 residues: MIIFWKGENDLSENFDRIRISLASPEQIRSWSSGEVKKPETINYRTLRPEKEGLFCEKIFGPVKDWECHCGKYKRVRHKGIVCDRCGVEVTTSKVRRERMGHIELAAPVCHIWYLKGIPSRMGLLLDMSPKVLEKVIYFVSYIVLDPGDTPLLKKQLLNEREYRENRDRYGEAFKAGIGAEAVKSLLYEVELDKMSSDLKEEIATTTGQRKSRAIKRLEVVESFRLSGNDPMWMILDVLPVIPPDLRPMVQLDGGRFATSDLNDLYRRVINRNNRLKRLLDLGAPDIIVRNEKRMLQEAVDALVDNGRRGRPVTGPGNRPLKSLSDMLKGKQGRFRQNLLGKRVDYSGRSVIVVGPNLKMHQCGLPKEMALELFKPFVMKKLVDKAIASNIKSAKKMVERGREEVWDILDDVIKEHPVLLNRAPTLHRLGIQAFEPVLVEGRALQLHPLVCTAYNADFDGDQMAVHVPLSAEAQTEARLLMLASNNILNPKDGKPVVTPTQDMVIGLYYLTFISAEAFSKENPRAFSSTDEARMAFELGQIDLHEKIRVKMSVPQKTGREILKSHEAQTFLEEIVDTSVGRIIFNDAIPTSLGFYNEIIDKKKLGNIVYECYRLEGNARTADMLDSLKSLGYEFSTRAGITVGVTDFETPLAKYDILQEADQEVEAIERDYEVGLITDEERHAQVVEIWNQATDDVTEVLKNSLSEDNPVYMMATSGARGNFQQIRQLAGMRGLMADPSGKIIDLPIKANFREGLTVLEYFISTHGARKGLADTALRTADSGYLTRRLVDVSQDVIVREDDCESVEGIWVGRIMEGSQLIEPLHQRIIGRVSVDTVIHPDTGEILVEENQMIDDDIGYEIERAGIEKVKIRSVLTCKTRHGVCKKCYGRNLATGYNVEIGEAVGILAAQSIGEPGTQLTMRTFHTGGVAGDDITRGLPRVEELFEVRKPKGQAVVVEVNGKVRFGENKGRREVEVLGENGEVLGTYPVHYGSRLKFEEGTEVEIGDALTEGPLNPHDILKTKGLQEVQRYLLQEVQKVYRSQGVDISDKHIEIMIRQMLKKVKIEDPGDTSLLPGAFVDISSFEDENNREIRAGGLPATCSPMLLGITKASLNTDSFLSAASFQETTKVLTEAAIKGKIDHLIGLKENVIIGKLIPAGTGYSAYRETSISEAPESENMVSD.

Zn(2+) is bound by residues C68, C70, C83, and C86. Mg(2+) is bound by residues D457, D459, and D461. Residues C802, C876, C883, and C886 each coordinate Zn(2+).

This sequence belongs to the RNA polymerase beta' chain family. The RNAP catalytic core consists of 2 alpha, 1 beta, 1 beta' and 1 omega subunit. When a sigma factor is associated with the core the holoenzyme is formed, which can initiate transcription. Mg(2+) is required as a cofactor. The cofactor is Zn(2+).

It catalyses the reaction RNA(n) + a ribonucleoside 5'-triphosphate = RNA(n+1) + diphosphate. DNA-dependent RNA polymerase catalyzes the transcription of DNA into RNA using the four ribonucleoside triphosphates as substrates. The polypeptide is DNA-directed RNA polymerase subunit beta' (Syntrophomonas wolfei subsp. wolfei (strain DSM 2245B / Goettingen)).